The following is a 126-amino-acid chain: Fluoride-specific ion channel FluC (126 aa).

4 helical membrane-spanning segments follow: residues 5–25 (FILAVAAGGALGSVARYLVGI), 39–59 (TLFINVTGSLLIGIFAGLFAV), 69–89 (IFLVVGICGGYTTFSTFSLDT), and 103–123 (AYMIGSVVLSVGALIAGIQIV). The Na(+) site is built by Gly-77 and Thr-80.

The protein belongs to the fluoride channel Fluc/FEX (TC 1.A.43) family.

The protein resides in the cell inner membrane. The enzyme catalyses fluoride(in) = fluoride(out). Na(+) is not transported, but it plays an essential structural role and its presence is essential for fluoride channel function. Fluoride-specific ion channel. Important for reducing fluoride concentration in the cell, thus reducing its toxicity. In Nitrobacter winogradskyi (strain ATCC 25391 / DSM 10237 / CIP 104748 / NCIMB 11846 / Nb-255), this protein is Fluoride-specific ion channel FluC.